The primary structure comprises 359 residues: Putative nucleotidyltransferase MAB21L1 (359 aa).

Residues 23-24 (RK) and 63-66 (YEGL) contribute to the a ribonucleoside 5'-triphosphate site. Mg(2+)-binding residues include Glu-73 and Glu-75. Residues Lys-248 and 252–255 (SLLK) each bind a ribonucleoside 5'-triphosphate.

Belongs to the mab-21 family. As to quaternary structure, monomer. Homodecamer; composed of 2 back to back homopentamers. The protein may exist as monomer in solution and oiligomerizes upon ligand binding.

The protein localises to the nucleus. Putative nucleotidyltransferase required for several aspects of embryonic development including normal development of the eye. It is unclear whether it displays nucleotidyltransferase activity in vivo. Binds single-stranded RNA (ssRNA). This is Putative nucleotidyltransferase MAB21L1 (mab21l1) from Xenopus laevis (African clawed frog).